We begin with the raw amino-acid sequence, 299 residues long: tRNA pseudouridine synthase B (299 aa).

Asp-38 serves as the catalytic Nucleophile.

The protein belongs to the pseudouridine synthase TruB family. Type 1 subfamily.

The enzyme catalyses uridine(55) in tRNA = pseudouridine(55) in tRNA. Responsible for synthesis of pseudouridine from uracil-55 in the psi GC loop of transfer RNAs. The polypeptide is tRNA pseudouridine synthase B (Pediococcus pentosaceus (strain ATCC 25745 / CCUG 21536 / LMG 10740 / 183-1w)).